We begin with the raw amino-acid sequence, 306 residues long: Histone-lysine N-methyltransferase SETMAR (306 aa).

Residues P60–G123 form the Pre-SET domain. 9 residues coordinate Zn(2+): C62, C64, C69, C74, C76, C105, C109, C111, and C115. One can recognise an SET domain in the interval F126–S250. S-adenosyl-L-methionine contacts are provided by residues K136 to W138, Y179, R207, and N210 to H211. Zn(2+) is bound by residues C213, C274, C276, and C281. The region spanning L270 to P286 is the Post-SET domain.

The protein belongs to the class V-like SAM-binding methyltransferase superfamily.

It localises to the nucleus. Its subcellular location is the chromosome. The catalysed reaction is L-lysyl(36)-[histone H3] + 2 S-adenosyl-L-methionine = N(6),N(6)-dimethyl-L-lysyl(36)-[histone H3] + 2 S-adenosyl-L-homocysteine + 2 H(+). Its function is as follows. Histone methyltransferase that methylates 'Lys-4' and 'Lys-36' of histone H3, 2 specific tags for epigenetic transcriptional activation. Specifically mediates dimethylation of H3 'Lys-36'. The chain is Histone-lysine N-methyltransferase SETMAR from Bos taurus (Bovine).